Reading from the N-terminus, the 253-residue chain is 5-oxoprolinase subunit A (253 aa).

This sequence belongs to the LamB/PxpA family. In terms of assembly, forms a complex composed of PxpA, PxpB and PxpC.

It carries out the reaction 5-oxo-L-proline + ATP + 2 H2O = L-glutamate + ADP + phosphate + H(+). Catalyzes the cleavage of 5-oxoproline to form L-glutamate coupled to the hydrolysis of ATP to ADP and inorganic phosphate. The chain is 5-oxoprolinase subunit A from Shouchella clausii (strain KSM-K16) (Alkalihalobacillus clausii).